A 247-amino-acid polypeptide reads, in one-letter code: E3 ubiquitin-protein ligase RNF182 (247 aa).

The RING-type zinc finger occupies 20 to 68 (CKICYNRYNLKQRKPKVLECCHRVCAKCLYKIIDFGDSPQGVIVCPFCR). A run of 2 helical transmembrane segments spans residues 184–204 (VLVWLLGLLYFSSLPLGIYLL) and 211–231 (LGVVFVSLVPSSLVILMVYGF).

In terms of assembly, interacts with ATP6V0C. In terms of tissue distribution, up-regulated in neuronal cells subjected to cell death-inducing injuries, such as oxygen and glucose deprivation (at protein level). Could be up-regulated in Alzheimer disease brains. Highly expressed in innate immune organs such as lymph nodes and spleen and in immune cells such as macrophages and dendritic cells.

The protein resides in the membrane. It localises to the cytoplasm. The catalysed reaction is S-ubiquitinyl-[E2 ubiquitin-conjugating enzyme]-L-cysteine + [acceptor protein]-L-lysine = [E2 ubiquitin-conjugating enzyme]-L-cysteine + N(6)-ubiquitinyl-[acceptor protein]-L-lysine.. It participates in protein modification; protein ubiquitination. E3 ubiquitin-protein ligase that mediates the ubiquitination of ATP6V0C and targets it to degradation via the ubiquitin-proteasome pathway. Also plays a role in the inhibition of TLR-triggered innate immune response by mediating 'Lys'-48-linked ubiquitination and subsequent degradation of NF-kappa-B component RELA. In Homo sapiens (Human), this protein is E3 ubiquitin-protein ligase RNF182 (RNF182).